Reading from the N-terminus, the 317-residue chain is Mitochondrial thiamine pyrophosphate carrier 1 (317 aa).

3 Solcar repeats span residues 12 to 110, 120 to 206, and 214 to 309; these read GTRR…TTQV, PPAL…LRPV, and PFGS…SLKL. 6 consecutive transmembrane segments (helical) span residues 17-35, 91-107, 126-146, 181-198, 220-240, and 284-301; these read VVLSGGIAGLVSRFCVAPL, LMYVCYGALQFTAYRTT, FVSGAVAGGLATASTYPLDLL, GCSAAVGQIVPYMGLFFA, AAAGVIASVLAKTGVFPLDLV, and GLTVSLIKAAPASAITMW.

The protein belongs to the mitochondrial carrier (TC 2.A.29) family.

The protein resides in the mitochondrion inner membrane. Functionally, mitochondrial transporter that mediates uptake of thiamine pyrophosphate (ThPP) into mitochondria. In Neosartorya fischeri (strain ATCC 1020 / DSM 3700 / CBS 544.65 / FGSC A1164 / JCM 1740 / NRRL 181 / WB 181) (Aspergillus fischerianus), this protein is Mitochondrial thiamine pyrophosphate carrier 1 (tpc1).